The following is a 630-amino-acid chain: Betaine/ectoine transporter LcoP (630 aa).

The segment covering 1 to 13 (MSTNSGNNLPESQ) has biased composition (polar residues). The tract at residues 1-28 (MSTNSGNNLPESQESPEEPHYPHDTHPG) is disordered. Positions 17–26 (EEPHYPHDTH) are enriched in basic and acidic residues. The next 12 membrane-spanning stretches (helical) occupy residues 47 to 67 (TVFG…ISSP), 85 to 105 (TGWL…YIAF), 125 to 145 (FSWI…FFGP), 177 to 197 (FHWG…LAYS), 230 to 250 (MAII…AIQV), 267 to 287 (ILIA…VSGV), 299 to 319 (ISLT…LFLL), 354 to 374 (WTAF…MFIA), 385 to 405 (FALI…TIFG), 436 to 456 (LPLY…FFVT), 479 to 499 (LIVV…LLTG), and 510 to 530 (LTIL…IAFI). Residues 611 to 630 (WADGWTPESTEEGEVDAKKD) form a disordered region.

This sequence belongs to the BCCT transporter (TC 2.A.15) family.

The protein resides in the cell membrane. With respect to regulation, uptake is activated by hyperosmotic stress. Shows a small but significant chill stimulation around 15 degrees Celsius. Involved in the uptake of osmoprotectants. Can transport betaine and ectoine. Na(+) is probably the coupling ion. The protein is Betaine/ectoine transporter LcoP of Corynebacterium glutamicum (strain ATCC 13032 / DSM 20300 / JCM 1318 / BCRC 11384 / CCUG 27702 / LMG 3730 / NBRC 12168 / NCIMB 10025 / NRRL B-2784 / 534).